Here is a 434-residue protein sequence, read N- to C-terminus: Cytochrome b-c1 complex subunit 2, mitochondrial (434 aa).

The transit peptide at 1-31 directs the protein to the mitochondrion; sequence MYSLNRLPRSAAFKSSANLLRRNASTTSAGG.

This sequence belongs to the peptidase M16 family. UQCRC2/QCR2 subfamily. Component of the ubiquinol-cytochrome c oxidoreductase (cytochrome b-c1 complex, complex III, CIII), a multisubunit enzyme composed of 10 subunits. The complex is composed of 3 respiratory subunits cytochrome b (COB), cytochrome c1 (CYT1) and Rieske protein (RIP1), 2 core protein subunits COR1 and QCR2, and 5 low-molecular weight protein subunits QCR6, QCR7, QCR8, QCR9 and QCR10. The complex exists as an obligatory dimer and forms supercomplexes (SCs) in the inner mitochondrial membrane with a monomer or a dimer of cytochrome c oxidase (complex IV, CIV), resulting in 2 different assemblies (supercomplexes III(2)IV and III(2)IV(2)). Interacts with MRJ1.

The protein resides in the mitochondrion inner membrane. Component of the ubiquinol-cytochrome c oxidoreductase, a multisubunit transmembrane complex that is part of the mitochondrial electron transport chain which drives oxidative phosphorylation. The respiratory chain contains 3 multisubunit complexes succinate dehydrogenase (complex II, CII), ubiquinol-cytochrome c oxidoreductase (cytochrome b-c1 complex, complex III, CIII) and cytochrome c oxidase (complex IV, CIV), that cooperate to transfer electrons derived from NADH and succinate to molecular oxygen, creating an electrochemical gradient over the inner membrane that drives transmembrane transport and the ATP synthase. The cytochrome b-c1 complex catalyzes electron transfer from ubiquinol to cytochrome c, linking this redox reaction to translocation of protons across the mitochondrial inner membrane, with protons being carried across the membrane as hydrogens on the quinol. In the process called Q cycle, 2 protons are consumed from the matrix, 4 protons are released into the intermembrane space and 2 electrons are passed to cytochrome c. This is Cytochrome b-c1 complex subunit 2, mitochondrial from Cryptococcus neoformans var. grubii serotype A (strain H99 / ATCC 208821 / CBS 10515 / FGSC 9487) (Filobasidiella neoformans var. grubii).